The following is an 84-amino-acid chain: Toxin BmKaTx16 (84 aa).

The N-terminal stretch at 1–19 (MNYLVMISFALLLMTGVES) is a signal peptide. One can recognise an LCN-type CS-alpha/beta domain in the interval 21–83 (RDAYIAKPHN…VPIRVPGKCH (63 aa)). 4 cysteine pairs are disulfide-bonded: Cys31-Cys82, Cys35-Cys55, Cys41-Cys65, and Cys45-Cys67. Position 84 (Arg84) is a propeptide, removed by a carboxypeptidase.

This sequence belongs to the long (4 C-C) scorpion toxin superfamily. Sodium channel inhibitor family. Alpha subfamily. Expressed by the venom gland.

It localises to the secreted. Its function is as follows. Alpha toxins bind voltage-independently at site-3 of sodium channels (Nav) and inhibit the inactivation of the activated channels, thereby blocking neuronal transmission. In Olivierus martensii (Manchurian scorpion), this protein is Toxin BmKaTx16.